The following is a 159-amino-acid chain: Ribosomal RNA large subunit methyltransferase H (159 aa).

S-adenosyl-L-methionine contacts are provided by residues L76, G108, and 127–132 (FGLLTL).

The protein belongs to the RNA methyltransferase RlmH family. In terms of assembly, homodimer.

It localises to the cytoplasm. The enzyme catalyses pseudouridine(1915) in 23S rRNA + S-adenosyl-L-methionine = N(3)-methylpseudouridine(1915) in 23S rRNA + S-adenosyl-L-homocysteine + H(+). Specifically methylates the pseudouridine at position 1915 (m3Psi1915) in 23S rRNA. The chain is Ribosomal RNA large subunit methyltransferase H from Streptococcus equi subsp. zooepidemicus (strain MGCS10565).